The sequence spans 744 residues: Tripartite motif-containing protein 2 (744 aa).

S10 is subject to Phosphoserine. The RING-type zinc-finger motif lies at 23 to 64; the sequence is CSICLERYKNPKVLPCLHTFCERCLQNYIPAHSLTLSCPVCR. A B box-type zinc finger spans residues 113-154; it reads GKPLSCPNHDGNVMDFYCQSCETAMCRECTEGEHAEHPTVPL. Positions 118, 121, 141, and 146 each coordinate Zn(2+). A Filamin repeat occupies 320–421; the sequence is TTNAVASETV…IRGSPFKLKV (102 aa). T371 carries the phosphothreonine modification. Residues S375, S424, and S428 each carry the phosphoserine modification. Residues 432-462 form a disordered region; it reads EGVKRRVKSPGSGHVKQKAVKRPASMYSTGK. 6 NHL repeats span residues 473–516, 520–563, 564–605, 609–652, 656–699, and 700–743; these read IFRV…FSND, KSRF…FSSD, GKFK…FQPN, VTRF…FNQE, MLKF…FDGS, and GSFL…YRYL.

The protein belongs to the TRIM/RBCC family. Forms homooligomers. Interacts with TRIM3; this interaction reduces TRIM2 activity. Interacts with myosin V; myosin V may not be a substrate for ubiquitination. Interacts with NEFL. Interacts with phosphorylated BCL2L11. Interacts with SIRPA. In terms of processing, RING-type zinc finger-dependent and UBE2D1-dependent autoubiquitination.

The protein localises to the cytoplasm. It carries out the reaction S-ubiquitinyl-[E2 ubiquitin-conjugating enzyme]-L-cysteine + [acceptor protein]-L-lysine = [E2 ubiquitin-conjugating enzyme]-L-cysteine + N(6)-ubiquitinyl-[acceptor protein]-L-lysine.. Its pathway is protein modification; protein ubiquitination. In terms of biological role, UBE2D1-dependent E3 ubiquitin-protein ligase that mediates the ubiquitination of NEFL and of phosphorylated BCL2L11. Plays a neuroprotective function. May play a role in neuronal rapid ischemic tolerance. Plays a role in antiviral immunity and limits New World arenavirus infection independently of its ubiquitin ligase activity. The polypeptide is Tripartite motif-containing protein 2 (TRIM2) (Ailuropoda melanoleuca (Giant panda)).